The primary structure comprises 268 residues: Ribosome maturation factor RimP (268 aa).

Disordered stretches follow at residues Met1–Gly41 and Leu223–Arg268. Positions Pro32 to Gly41 are enriched in low complexity. The segment covering Glu248 to Gly257 has biased composition (basic and acidic residues).

The protein belongs to the RimP family.

It localises to the cytoplasm. Functionally, required for maturation of 30S ribosomal subunits. In Frankia casuarinae (strain DSM 45818 / CECT 9043 / HFP020203 / CcI3), this protein is Ribosome maturation factor RimP.